The sequence spans 21 residues: Chlorophyllase type 2 (21 aa).

The protein belongs to the AB hydrolase superfamily. Lipase family.

The catalysed reaction is a chlorophyll + H2O = a chlorophyllide + phytol + H(+). Its pathway is porphyrin-containing compound metabolism; chlorophyll degradation. In terms of biological role, catalyzes the hydrolysis of ester bond in chlorophyll to yield chlorophyllide and phytol. The polypeptide is Chlorophyllase type 2 (Chenopodium album (Fat hen)).